Here is a 450-residue protein sequence, read N- to C-terminus: Dol-P-Glc:Glc(2)Man(9)GlcNAc(2)-PP-Dol alpha-1,2-glucosyltransferase (450 aa).

A helical transmembrane segment spans residues 12-32 (ISIISKYVAIVIFLIFVIIMF). An N-linked (GlcNAc...) asparagine glycan is attached at N34. The next 4 membrane-spanning stretches (helical) occupy residues 158 to 178 (YFLF…LGLI), 190 to 210 (ALVG…IAFI), 243 to 263 (LLGY…NGGI), and 273 to 293 (IELH…FTIP). An N-linked (GlcNAc...) asparagine glycan is attached at N297. A run of 4 helical transmembrane segments spans residues 312 to 332 (IILN…FTIV), 357 to 377 (LKPL…SSLI), 384 to 404 (FIGI…SPLF), and 429 to 449 (FIWL…KGII).

This sequence belongs to the ALG10 glucosyltransferase family.

It localises to the endoplasmic reticulum membrane. The catalysed reaction is an alpha-D-Glc-(1-&gt;3)-alpha-D-Glc-(1-&gt;3)-alpha-D-Man-(1-&gt;2)-alpha-D-Man-(1-&gt;2)-alpha-D-Man-(1-&gt;3)-[alpha-D-Man-(1-&gt;2)-alpha-D-Man-(1-&gt;3)-[alpha-D-Man-(1-&gt;2)-alpha-D-Man-(1-&gt;6)]-alpha-D-Man-(1-&gt;6)]-beta-D-Man-(1-&gt;4)-beta-D-GlcNAc-(1-&gt;4)-alpha-D-GlcNAc-diphospho-di-trans,poly-cis-dolichol + a di-trans,poly-cis-dolichyl beta-D-glucosyl phosphate = a alpha-D-Glc-(1-&gt;2)-alpha-D-Glc-(1-&gt;3)-alpha-D-Glc-(1-&gt;3)-alpha-D-Man-(1-&gt;2)-alpha-D-Man-(1-&gt;2)-alpha-D-Man-(1-&gt;3)-[alpha-D-Man-(1-&gt;2)-alpha-D-Man-(1-&gt;3)-[alpha-D-Man-(1-&gt;2)-alpha-D-Man-(1-&gt;6)]-alpha-D-Man-(1-&gt;6)]-beta-D-Man-(1-&gt;4)-beta-D-GlcNAc-(1-&gt;4)-alpha-D-GlcNAc-diphospho-di-trans,poly-cis-dolichol + a di-trans,poly-cis-dolichyl phosphate + H(+). The protein operates within protein modification; protein glycosylation. In terms of biological role, dol-P-Glc:Glc(2)Man(9)GlcNAc(2)-PP-Dol alpha-1,2-glucosyltransferase that operates in the biosynthetic pathway of dolichol-linked oligosaccharides, the glycan precursors employed in protein asparagine (N)-glycosylation. The assembly of dolichol-linked oligosaccharides begins on the cytosolic side of the endoplasmic reticulum membrane and finishes in its lumen. The sequential addition of sugars to dolichol pyrophosphate produces dolichol-linked oligosaccharides containing fourteen sugars, including two GlcNAcs, nine mannoses and three glucoses. Once assembled, the oligosaccharide is transferred from the lipid to nascent proteins by oligosaccharyltransferases. In the lumen of the endoplasmic reticulum, adds the third and last glucose residue from dolichyl phosphate glucose (Dol-P-Glc) onto the lipid-linked oligosaccharide intermediate Glc(2)Man(9)GlcNAc(2)-PP-Dol to produce Glc(3)Man(9)GlcNAc(2)-PP-Dol. The sequence is that of Dol-P-Glc:Glc(2)Man(9)GlcNAc(2)-PP-Dol alpha-1,2-glucosyltransferase (DIE2) from Candida albicans (strain SC5314 / ATCC MYA-2876) (Yeast).